The primary structure comprises 283 residues: Formamidopyrimidine-DNA glycosylase (283 aa).

Proline 2 serves as the catalytic Schiff-base intermediate with DNA. Residue glutamate 3 is the Proton donor of the active site. The Proton donor; for beta-elimination activity role is filled by lysine 58. 3 residues coordinate DNA: histidine 100, arginine 119, and arginine 162. The FPG-type zinc finger occupies arginine 247–arginine 283. Arginine 273 serves as the catalytic Proton donor; for delta-elimination activity.

This sequence belongs to the FPG family. As to quaternary structure, monomer. Zn(2+) is required as a cofactor.

The enzyme catalyses Hydrolysis of DNA containing ring-opened 7-methylguanine residues, releasing 2,6-diamino-4-hydroxy-5-(N-methyl)formamidopyrimidine.. It carries out the reaction 2'-deoxyribonucleotide-(2'-deoxyribose 5'-phosphate)-2'-deoxyribonucleotide-DNA = a 3'-end 2'-deoxyribonucleotide-(2,3-dehydro-2,3-deoxyribose 5'-phosphate)-DNA + a 5'-end 5'-phospho-2'-deoxyribonucleoside-DNA + H(+). In terms of biological role, involved in base excision repair of DNA damaged by oxidation or by mutagenic agents. Acts as a DNA glycosylase that recognizes and removes damaged bases. Has a preference for oxidized purines, such as 7,8-dihydro-8-oxoguanine (8-oxoG). Has AP (apurinic/apyrimidinic) lyase activity and introduces nicks in the DNA strand. Cleaves the DNA backbone by beta-delta elimination to generate a single-strand break at the site of the removed base with both 3'- and 5'-phosphates. The sequence is that of Formamidopyrimidine-DNA glycosylase from Cereibacter sphaeroides (strain ATCC 17029 / ATH 2.4.9) (Rhodobacter sphaeroides).